A 466-amino-acid polypeptide reads, in one-letter code: ATP synthase subunit beta (466 aa).

Residue 156–163 (GGAGVGKT) coordinates ATP.

The protein belongs to the ATPase alpha/beta chains family. F-type ATPases have 2 components, CF(1) - the catalytic core - and CF(0) - the membrane proton channel. CF(1) has five subunits: alpha(3), beta(3), gamma(1), delta(1), epsilon(1). CF(0) has three main subunits: a(1), b(2) and c(9-12). The alpha and beta chains form an alternating ring which encloses part of the gamma chain. CF(1) is attached to CF(0) by a central stalk formed by the gamma and epsilon chains, while a peripheral stalk is formed by the delta and b chains.

Its subcellular location is the cell inner membrane. The catalysed reaction is ATP + H2O + 4 H(+)(in) = ADP + phosphate + 5 H(+)(out). Produces ATP from ADP in the presence of a proton gradient across the membrane. The catalytic sites are hosted primarily by the beta subunits. The sequence is that of ATP synthase subunit beta from Dechloromonas aromatica (strain RCB).